The sequence spans 77 residues: U18-lycotoxin-Ls1a (77 aa).

Residues 1–22 form the signal peptide; that stretch reads MSPKMQALLLLLGLITLLVVHA. Positions 23 to 34 are excised as a propeptide; the sequence is EEELSENTESER. Intrachain disulfides connect cysteine 36–cysteine 51, cysteine 43–cysteine 56, cysteine 50–cysteine 67, and cysteine 58–cysteine 65.

This sequence belongs to the neurotoxin 02 (plectoxin) family. In terms of tissue distribution, expressed by the venom gland.

The protein resides in the secreted. This Lycosa singoriensis (Wolf spider) protein is U18-lycotoxin-Ls1a.